Reading from the N-terminus, the 190-residue chain is Threonylcarbamoyl-AMP synthase (190 aa).

A YrdC-like domain is found at 7 to 190 (GDAIAAAIDV…ALTGELFRQG (184 aa)).

It belongs to the SUA5 family. TsaC subfamily.

It is found in the cytoplasm. The enzyme catalyses L-threonine + hydrogencarbonate + ATP = L-threonylcarbamoyladenylate + diphosphate + H2O. In terms of biological role, required for the formation of a threonylcarbamoyl group on adenosine at position 37 (t(6)A37) in tRNAs that read codons beginning with adenine. Catalyzes the conversion of L-threonine, HCO(3)(-)/CO(2) and ATP to give threonylcarbamoyl-AMP (TC-AMP) as the acyladenylate intermediate, with the release of diphosphate. This Shigella boydii serotype 4 (strain Sb227) protein is Threonylcarbamoyl-AMP synthase.